A 311-amino-acid chain; its full sequence is Phospho-N-acetylmuramoyl-pentapeptide-transferase (311 aa).

Transmembrane regions (helical) follow at residues 2-22 (ENNV…IEGF), 48-68 (GTPT…LLNF), 74-94 (SFLI…DDFM), 104-124 (ITAV…VYFI), 144-164 (LGWF…NAVN), 168-188 (GVDG…LIVG), 192-212 (VVYL…WHPA), 214-234 (IFMG…SFAL), 237-257 (LELF…SVII), and 288-308 (KIAF…IIGW).

This sequence belongs to the glycosyltransferase 4 family. MraY subfamily. Mg(2+) serves as cofactor.

The protein resides in the cell inner membrane. It catalyses the reaction UDP-N-acetyl-alpha-D-muramoyl-L-alanyl-gamma-D-glutamyl-meso-2,6-diaminopimeloyl-D-alanyl-D-alanine + di-trans,octa-cis-undecaprenyl phosphate = di-trans,octa-cis-undecaprenyl diphospho-N-acetyl-alpha-D-muramoyl-L-alanyl-D-glutamyl-meso-2,6-diaminopimeloyl-D-alanyl-D-alanine + UMP. It functions in the pathway cell wall biogenesis; peptidoglycan biosynthesis. Functionally, catalyzes the initial step of the lipid cycle reactions in the biosynthesis of the cell wall peptidoglycan: transfers peptidoglycan precursor phospho-MurNAc-pentapeptide from UDP-MurNAc-pentapeptide onto the lipid carrier undecaprenyl phosphate, yielding undecaprenyl-pyrophosphoryl-MurNAc-pentapeptide, known as lipid I. The polypeptide is Phospho-N-acetylmuramoyl-pentapeptide-transferase (Kosmotoga olearia (strain ATCC BAA-1733 / DSM 21960 / TBF 19.5.1)).